The chain runs to 427 residues: Cysteate synthase (427 aa).

At Lys104 the chain carries N6-(pyridoxal phosphate)lysine. Asn130 and Thr382 together coordinate pyridoxal 5'-phosphate.

Belongs to the threonine synthase family. Cysteate synthase subfamily. As to quaternary structure, homotrimer. The cofactor is pyridoxal 5'-phosphate.

It catalyses the reaction O-phospho-L-serine + sulfite + H(+) = L-cysteate + phosphate. Its pathway is cofactor biosynthesis; coenzyme M biosynthesis. Functionally, specifically catalyzes the beta-elimination of phosphate from L-phosphoserine and the beta-addition of sulfite to the dehydroalanine intermediate to produce L-cysteate. This is Cysteate synthase from Methanocella paludicola (strain DSM 17711 / JCM 13418 / NBRC 101707 / SANAE).